Consider the following 195-residue polypeptide: uncharacterized protein (195 aa).

Disordered stretches follow at residues 1–54 (MPKG…SNKI) and 173–195 (LAGAARGPSQTGTPVAEEAKPIS). Residues 7-20 (KPNEKKEELEKFAK) show a composition bias toward basic and acidic residues. Polar residues predominate over residues 45–54 (QNDSSSSNKI). Positions 48-97 (SSSSNKIVLSQAEKDLLRTELDKTEEEISTLKQVLSARQKHAAELKRKLG) form a coiled coil.

Belongs to the TPD52 family.

This is an uncharacterized protein from Caenorhabditis elegans.